Here is a 494-residue protein sequence, read N- to C-terminus: Alpha-amylase 1 (494 aa).

Residues 1-18 (MFLAKSIVCLALLAVANA) form the signal peptide. Cys46 and Cys102 are joined by a disulfide. 3 residues coordinate Ca(2+): Asn116, Arg165, and Asp174. Cys153 and Cys167 are joined by a disulfide. Residue Arg202 participates in chloride binding. The active-site Nucleophile is Asp204. A Ca(2+)-binding site is contributed by His208. Catalysis depends on Glu241, which acts as the Proton donor. Chloride-binding residues include Asn304 and Arg343. The disordered stretch occupies residues 350–370 (FTDTDQGPPTTDGQNIASPSF). A compositionally biased stretch (low complexity) spans 351–363 (TDTDQGPPTTDGQ). Disulfide bonds link Cys376-Cys382 and Cys448-Cys460.

The protein belongs to the glycosyl hydrolase 13 family. As to quaternary structure, monomer. Ca(2+) serves as cofactor. It depends on chloride as a cofactor.

It catalyses the reaction Endohydrolysis of (1-&gt;4)-alpha-D-glucosidic linkages in polysaccharides containing three or more (1-&gt;4)-alpha-linked D-glucose units.. The chain is Alpha-amylase 1 (Amy35) from Drosophila ananassae (Fruit fly).